Consider the following 363-residue polypeptide: DNA replication and repair protein RecF (363 aa).

Residue 33-40 coordinates ATP; the sequence is GDNGQGKT.

It belongs to the RecF family.

It localises to the cytoplasm. Its function is as follows. The RecF protein is involved in DNA metabolism; it is required for DNA replication and normal SOS inducibility. RecF binds preferentially to single-stranded, linear DNA. It also seems to bind ATP. This chain is DNA replication and repair protein RecF, found in Tropheryma whipplei (strain TW08/27) (Whipple's bacillus).